Reading from the N-terminus, the 720-residue chain is Glutaryl-7-aminocephalosporanic-acid acylase (720 aa).

Positions 1-29 (MLRVLHRAASALVMATVIGLAPGVAFALA) are cleaved as a signal peptide. Positions 188–198 (EGDPPDLADQG) are cleaved as a propeptide — spacer peptide. Ser-199 acts as the Nucleophile in catalysis. Residues His-221 and Glu-653 contribute to the active site.

Belongs to the peptidase S45 family. In terms of assembly, heterodimer of a small subunit and a large subunit processed from the same precursor.

The protein resides in the periplasm. The catalysed reaction is (7R)-7-(4-carboxybutanamido)cephalosporanate + H2O = (7R)-7-aminocephalosporanate + glutarate. Catalyzes the deacylation of 7 beta-(4-carboxybutanamido)cephalosporanic acid (glutaryl-7-aminocephalosporanic acid or GL-7-ACA) to 7-aminocephalosporanic acid (7-ACA). Cannot efficiently use cephalosporin C (CPC), penicillin G, or ampicillin as substrates. The polypeptide is Glutaryl-7-aminocephalosporanic-acid acylase (Brevundimonas diminuta (Pseudomonas diminuta)).